The following is a 172-amino-acid chain: Envelope protein UL45 (172 aa).

The Intravirion portion of the chain corresponds to 1–27 (MPLRASEHAYRPLGPGTPPVRARLPAA). A helical; Signal-anchor for type II membrane protein membrane pass occupies residues 28–48 (AWVGVGTIIGGVVIIAALVLV). The Virion surface portion of the chain corresponds to 49-172 (PSRASWALSP…TSTRNALGLP (124 aa)).

The protein belongs to the herpesviridae HHV-1 UL45 family.

Its subcellular location is the virion membrane. Its function is as follows. Important virulence factor of HSV neurotropism. Seems to be required for glycoprotein B-induced fusion. Dispensable for growth in vitro. The protein is Envelope protein UL45 of Homo sapiens (Human).